The primary structure comprises 530 residues: UDP-glucuronosyltransferase 2B7 (530 aa).

Residues 1-17 (MPQKWISALLLLQISFC) form the signal peptide. Asn316 is a glycosylation site (N-linked (GlcNAc...) asparagine). UDP-alpha-D-glucuronate-binding positions include 374–380 (THGGANG) and Glu400. Residues 496 to 516 (IGFLLACVLAIVLLAVKCCLF) traverse the membrane as a helical segment.

This sequence belongs to the UDP-glycosyltransferase family.

It localises to the endoplasmic reticulum membrane. The enzyme catalyses glucuronate acceptor + UDP-alpha-D-glucuronate = acceptor beta-D-glucuronoside + UDP + H(+). The catalysed reaction is 17alpha-estradiol + UDP-alpha-D-glucuronate = 17alpha-estradiol 17-O-(beta-D-glucuronate) + UDP + H(+). It carries out the reaction 17beta-estradiol + UDP-alpha-D-glucuronate = 17beta-estradiol 17-O-(beta-D-glucuronate) + UDP + H(+). It catalyses the reaction 2-hydroxy-17beta-estradiol + UDP-alpha-D-glucuronate = 2-hydroxy-17beta-estradiol 3-O-(beta-D-glucuronate) + UDP + H(+). The enzyme catalyses 4-hydroxy-17beta-estradiol + UDP-alpha-D-glucuronate = 17beta-estradiol 4-O-(beta-D-glucuronate) + UDP + H(+). The catalysed reaction is 4-hydroxyestrone + UDP-alpha-D-glucuronate = estrone 4-O-(beta-D-glucuronate) + UDP + H(+). It carries out the reaction 16alpha-hydroxyestrone + UDP-alpha-D-glucuronate = 16alpha-hydroxyestrone 16-O-(beta-D-glucuronate) + UDP + H(+). It catalyses the reaction 16alpha,17beta-estriol + UDP-alpha-D-glucuronate = 16alpha,17beta-estriol 16-O-(beta-D-glucuronate) + UDP + H(+). The enzyme catalyses 16beta,17beta-estriol + UDP-alpha-D-glucuronate = 16beta,17beta-estriol 16-O-(beta-D-glucuronate) + UDP + H(+). The catalysed reaction is 16alpha,17alpha-estriol + UDP-alpha-D-glucuronate = 16alpha,17alpha-estriol 16-O-(beta-D-glucuronate) + UDP + H(+). It carries out the reaction 16alpha,17alpha-estriol + UDP-alpha-D-glucuronate = 16alpha,17alpha-estriol 17-O-(beta-D-glucuronate) + UDP + H(+). It catalyses the reaction epitestosterone + UDP-alpha-D-glucuronate = epitestosterone 17-O-(beta-D-glucuronate) + UDP + H(+). The enzyme catalyses hyodeoxycholate + UDP-alpha-D-glucuronate = hyodeoxycholate 6-O-(beta-D-glucuronate) + UDP + H(+). The catalysed reaction is hyocholate + UDP-alpha-D-glucuronate = hyocholate 6-O-(beta-D-glucuronate) + UDP + H(+). It carries out the reaction all-trans-retinoate + UDP-alpha-D-glucuronate = all-trans-retinoyl-1-O-(beta-D-glucuronate) + UDP. It catalyses the reaction all-trans-4-hydroxyretinoate + UDP-alpha-D-glucuronate = all-trans-4-hydroxy-4-O-(beta-D-glucuronide)-retinoate + UDP + H(+). The enzyme catalyses (E)-ferulate + UDP-alpha-D-glucuronate = (E)-ferulic acid beta-D-glucuronate ester + UDP. The catalysed reaction is 8-iso-prostaglandin F2alpha + UDP-alpha-D-glucuronate = 8-iso-prostaglandin F2alpha-glucuronide + UDP + H(+). It carries out the reaction 5-epi-5-F2t-IsoP + UDP-alpha-D-glucuronate = 5-epi-5-F2t-IsoP-glucuronide + UDP + H(+). It catalyses the reaction (5Z,8Z,11Z,14Z)-eicosatetraenoate + UDP-alpha-D-glucuronate = O-[(5Z),(8Z),(11Z),(14Z)-eicosatetraenoyl]-beta-D-glucuronate + UDP. The enzyme catalyses 15-hydroxy-(5Z,8Z,11Z,13E)-eicosatetraenoate + UDP-alpha-D-glucuronate = 15-O-(beta-D-glucuronosyl)-(5Z,8Z,11Z,14Z)-eicosatetraenoate + UDP + H(+). The catalysed reaction is 20-hydroxy-(5Z,8Z,11Z,14Z)-eicosatetraenoate + UDP-alpha-D-glucuronate = 20-O-(beta-D-glucuronosyl)-(5Z,8Z,11Z,14Z)-eicosatetraenoate + UDP + H(+). It carries out the reaction (E)-ferulate + UDP-alpha-D-glucuronate = (E)-4-O-(beta-D-glucuronosyl)-ferulate + UDP + H(+). It catalyses the reaction prostaglandin B1 + UDP-alpha-D-glucuronate = 15-O-(beta-D-glucuronosyl)-prostaglandin B1 + UDP + H(+). The enzyme catalyses mycophenolate + UDP-alpha-D-glucuronate = mycophenolic acid O-acyl-beta-D-glucuronide + UDP. The catalysed reaction is losartan + UDP-alpha-D-glucuronate = losartan-2-N-beta-D-glucuronide + UDP. It carries out the reaction candesartan + UDP-alpha-D-glucuronate = candesartan O-beta-D-glucuronoside + UDP. It catalyses the reaction candesartan + UDP-alpha-D-glucuronate = candesartan-2-N-beta-D-glucuronide + UDP. The enzyme catalyses zolasartan + UDP-alpha-D-glucuronate = zolarsartan O-beta-D-glucuronoside + UDP. Functionally, UDP-glucuronosyltransferase (UGT) that catalyzes phase II biotransformation reactions in which lipophilic substrates are conjugated with glucuronic acid to increase the metabolite's water solubility, thereby facilitating excretion into either the urine or bile. Essential for the elimination and detoxification of drugs, xenobiotics and endogenous compounds. Catalyzes the glucuronidation of endogenous steroid hormones such as androgens (epitestosterone, androsterone) and estrogens (estradiol, epiestradiol, estriol, catechol estrogens). Also regulates the levels of retinoic acid, a major metabolite of vitamin A involved in apoptosis, cellular growth and differentiation, and embryonic development. Contributes to bile acid (BA) detoxification by catalyzing the glucuronidation of BA substrates, which are natural detergents for dietary lipids absorption. Involved in the glucuronidation of arachidonic acid (AA) and AA-derived eicosanoids including 15-HETE, 20-HETE, PGE2, PGB1 and F2-isoprostanes (8-iso-PGF2alpha and 5-epi-5-F2t-IsoP). Involved in the glucuronidation of the phytochemical ferulic acid at the phenolic or the carboxylic acid group. Involved in the glucuronidation of the AGTR1 angiotensin receptor antagonist losartan, caderastan and zolarsatan, drugs which can inhibit the effect of angiotensin II. Also metabolizes mycophenolate, an immunosuppressive agent. The sequence is that of UDP-glucuronosyltransferase 2B7 from Rattus norvegicus (Rat).